A 79-amino-acid chain; its full sequence is Acyl carrier protein (79 aa).

Positions 2-77 constitute a Carrier domain; the sequence is ADFEARVKEI…SAIDYVKTHV (76 aa). O-(pantetheine 4'-phosphoryl)serine is present on Ser37.

It belongs to the acyl carrier protein (ACP) family. 4'-phosphopantetheine is transferred from CoA to a specific serine of apo-ACP by AcpS. This modification is essential for activity because fatty acids are bound in thioester linkage to the sulfhydryl of the prosthetic group.

It localises to the cytoplasm. It functions in the pathway lipid metabolism; fatty acid biosynthesis. Functionally, carrier of the growing fatty acid chain in fatty acid biosynthesis. The sequence is that of Acyl carrier protein from Endomicrobium trichonymphae.